The following is a 581-amino-acid chain: AP2-like ethylene-responsive transcription factor AIL6 (581 aa).

Disordered stretches follow at residues 105–132 (VRYS…HHNQ) and 205–240 (NNTN…TDSE). Low complexity-rich tracts occupy residues 108-122 (SDNS…SLTQ) and 218-232 (RGNN…NNNN). 2 consecutive DNA-binding regions (AP2/ERF) follow at residues 268 to 331 (IYRG…TNFP) and 367 to 425 (IYRG…TNFE).

It belongs to the AP2/ERF transcription factor family. AP2 subfamily. As to expression, expressed in roots, seedlings, hypocotyl, inflorescence, siliques, and pistils. Also detected at low levels in leaves.

It localises to the nucleus. Its function is as follows. Probably acts as a transcriptional activator. Binds to the GCC-box pathogenesis-related promoter element. May be involved in the regulation of gene expression by stress factors and by components of stress signal transduction pathways. The polypeptide is AP2-like ethylene-responsive transcription factor AIL6 (Arabidopsis thaliana (Mouse-ear cress)).